We begin with the raw amino-acid sequence, 114 residues long: MSLDPAIASRLKRNEAGLFSAVAQERSTGDVLMVAWMDDEALARTLDTRKGTYYSRSRQQYWVKGETSGHTQYVHEVRLDCDGDTVLLVVDQEGAACHTGTHTCFDTDVLLAVE.

D80 contacts Mg(2+). Residue C81 participates in Zn(2+) binding. Residues D82 and D84 each contribute to the Mg(2+) site. Zn(2+)-binding residues include C97 and C104.

It belongs to the PRA-CH family. Homodimer. It depends on Mg(2+) as a cofactor. The cofactor is Zn(2+).

The protein localises to the cytoplasm. The enzyme catalyses 1-(5-phospho-beta-D-ribosyl)-5'-AMP + H2O = 1-(5-phospho-beta-D-ribosyl)-5-[(5-phospho-beta-D-ribosylamino)methylideneamino]imidazole-4-carboxamide. The protein operates within amino-acid biosynthesis; L-histidine biosynthesis; L-histidine from 5-phospho-alpha-D-ribose 1-diphosphate: step 3/9. In terms of biological role, catalyzes the hydrolysis of the adenine ring of phosphoribosyl-AMP. The chain is Phosphoribosyl-AMP cyclohydrolase from Rhodococcus jostii (strain RHA1).